The chain runs to 735 residues: Disintegrin and metalloproteinase domain-containing protein 2 (735 aa).

An N-terminal signal peptide occupies residues 1 to 18; sequence MWLILLLLSGLSELGGLS. Positions 19-180 are excised as a propeptide; sequence QSQTEGTREK…YKIRSIKPQR (162 aa). The Extracellular portion of the chain corresponds to 19–686; it reads QSQTEGTREK…ASAYRSKSPR (668 aa). 3 N-linked (GlcNAc...) asparagine glycosylation sites follow: N128, N226, and N279. A Peptidase M12B domain is found at 184-381; the sequence is HYLEIHIVVE…QSSHCLQNQP (198 aa). Disulfide bonds link C293-C376, C335-C360, C337-C342, and C449-C469. N-linked (GlcNAc...) asparagine glycans are attached at residues N359, N463, N489, N569, and N585. One can recognise a Disintegrin domain in the interval 389-476; that stretch reads MAVCGNGEVE…EVCEDFFVQN (88 aa). Positions 615–648 constitute an EGF-like domain; sequence LGYDCNLEKCNHHGVCNNKKNCHCDPTYLPPDCK. 3 cysteine pairs are disulfide-bonded: C619/C630, C624/C636, and C638/C647. Residues 687–707 form a helical membrane-spanning segment; that stretch reads WPFFLIIPFYVVILVLIGMLV. Residues 708–735 lie on the Cytoplasmic side of the membrane; it reads KVYSQRMKWRMDDFSSEEQFESESESKD. At S729 the chain carries Phosphoserine.

In terms of assembly, heterodimer with ADAM1/fertilin subunit alpha. Post-translationally, the signal and the metalloprotease domain are cleaved during the epididymal maturation of the spermatozoa. Expressed in the testis and testicular sperm (at protein level).

The protein resides in the membrane. Sperm surface membrane protein that may be involved in sperm-egg plasma membrane adhesion and fusion during fertilization. Could have a direct role in sperm-zona binding or migration of sperm from the uterus into the oviduct. Interactions with egg membrane could be mediated via binding between its disintegrin-like domain to one or more integrins receptors on the egg. This is a non catalytic metalloprotease-like protein. The chain is Disintegrin and metalloproteinase domain-containing protein 2 from Mus musculus (Mouse).